The chain runs to 726 residues: Sensory/regulatory protein RpfC (726 aa).

Helical transmembrane passes span 23–40 (NLIRIIITTLFISYLGWR), 52–72 (TWLILVGELLVSLGLMVAILL), 95–115 (IMAIQGEPASPLYAVCMWVTI), 128–148 (AATAMGSLCFLGAILISPYWK), and 152–172 (YLSWGLLLGLIAVPLYFDSLL). In terms of domain architecture, Histidine kinase spans 195–417 (NMSHEFRTPL…VFWFELPMAI (223 aa)). Position 198 is a phosphohistidine; by autocatalysis (histidine 198). The region spanning 463–581 (RMLVADDHEA…KLLDTLADLA (119 aa)) is the Response regulatory domain. Aspartate 512 bears the 4-aspartylphosphate mark. The 94-residue stretch at 618-711 (GEEFERQFVR…KAGKDALDAR (94 aa)) folds into the HPt domain. The residue at position 657 (histidine 657) is a Phosphohistidine.

In terms of assembly, at low DSF concentrations, interacts with RpfF. In terms of processing, autophosphorylated. Activation may require a sequential transfer of a phosphate group from a His in the primary transmitter domain, to an Asp in the receiver domain and to a His in the secondary transmitter domain.

It localises to the cell inner membrane. The catalysed reaction is ATP + protein L-histidine = ADP + protein N-phospho-L-histidine.. Binding of DSF to the sensor region causes allosteric change, which facilitates RpfC autophosphorylation. Hybrid sensor kinase that regulates diverse biological functions through two distinct molecular mechanisms. At low cell density, the extracellular concentration of the diffusible signaling factor (DSF) is below a threshold, and unphosphorylated RpfC is involved in the negative regulation of DSF synthesis, via direct interaction with the DSF synthase RpfF. Interaction prevents synthesis of DSF, which remains at a basal level. This activity does not involve the phosphorelay mechanism and is not dependent on RpfG. Is also member of the two-component regulatory system RpfG/RpfC, which is involved in the perception and response to DSF, which is essential for cell-cell signaling. At high cell density, the level of extracellular DSF increases and binding of DSF to the sensor region of RpfC causes autophosphorylation of RpfC, which results in the release of RpfF and the activation of RpfG via a four-step phosphorelay. Activation of RpfG leads to the positive regulation of biofilm dispersal and the production of virulence factors. In Xanthomonas campestris pv. campestris (strain ATCC 33913 / DSM 3586 / NCPPB 528 / LMG 568 / P 25), this protein is Sensory/regulatory protein RpfC (rpfC).